The sequence spans 272 residues: L-aspartate dehydrogenase (272 aa).

Residues Ala-125 and Asn-192 each coordinate NAD(+). His-222 is a catalytic residue.

The protein belongs to the L-aspartate dehydrogenase family.

The enzyme catalyses L-aspartate + NADP(+) + H2O = oxaloacetate + NH4(+) + NADPH + H(+). It catalyses the reaction L-aspartate + NAD(+) + H2O = oxaloacetate + NH4(+) + NADH + H(+). It functions in the pathway cofactor biosynthesis; NAD(+) biosynthesis; iminoaspartate from L-aspartate (dehydrogenase route): step 1/1. Specifically catalyzes the NAD or NADP-dependent dehydrogenation of L-aspartate to iminoaspartate. The protein is L-aspartate dehydrogenase of Nitrosopumilus maritimus (strain SCM1).